The chain runs to 323 residues: Pantothenate kinase (323 aa).

101–108 is an ATP binding site; the sequence is GSVAVGKS.

The protein belongs to the prokaryotic pantothenate kinase family.

It is found in the cytoplasm. It carries out the reaction (R)-pantothenate + ATP = (R)-4'-phosphopantothenate + ADP + H(+). Its pathway is cofactor biosynthesis; coenzyme A biosynthesis; CoA from (R)-pantothenate: step 1/5. The polypeptide is Pantothenate kinase (Xanthobacter autotrophicus (strain ATCC BAA-1158 / Py2)).